A 429-amino-acid polypeptide reads, in one-letter code: Glucose-1-phosphate adenylyltransferase (429 aa).

Alpha-D-glucose 1-phosphate contacts are provided by residues Gly-162, 177–178, and Ser-209; that span reads EK.

This sequence belongs to the bacterial/plant glucose-1-phosphate adenylyltransferase family. In terms of assembly, homotetramer.

It catalyses the reaction alpha-D-glucose 1-phosphate + ATP + H(+) = ADP-alpha-D-glucose + diphosphate. The protein operates within glycan biosynthesis; glycogen biosynthesis. Involved in the biosynthesis of ADP-glucose, a building block required for the elongation reactions to produce glycogen. Catalyzes the reaction between ATP and alpha-D-glucose 1-phosphate (G1P) to produce pyrophosphate and ADP-Glc. This chain is Glucose-1-phosphate adenylyltransferase, found in Rippkaea orientalis (strain PCC 8801 / RF-1) (Cyanothece sp. (strain PCC 8801)).